The primary structure comprises 220 residues: Urease accessory protein UreF (220 aa).

It belongs to the UreF family. UreD, UreF and UreG form a complex that acts as a GTP-hydrolysis-dependent molecular chaperone, activating the urease apoprotein by helping to assemble the nickel containing metallocenter of UreC. The UreE protein probably delivers the nickel.

It localises to the cytoplasm. In terms of biological role, required for maturation of urease via the functional incorporation of the urease nickel metallocenter. This chain is Urease accessory protein UreF, found in Bordetella bronchiseptica (strain ATCC BAA-588 / NCTC 13252 / RB50) (Alcaligenes bronchisepticus).